A 564-amino-acid chain; its full sequence is MSYPADDYESEAAYDPYAYPGDYDMHTGDPKQDLAYERQYEQQTYQVIPEVIKNFIQYFHKTVSDLIDQKVYELQASRVSSDVIDQKVYEIQDIYENSWTKLTERFFKNTPWPEAETIAPQVGNDAVFLILYKELYYRHIYAKVSGGPSLEQRFESYYNYCNLFNYILNADGPAPLELPNQWLWDIIDEFIYQFQSFSQYRCKTAKKSEEEIDFLRSNPKIWNVHSVLNVLHSLVDKSNINRQLEVYTSGGDPESVAGEYGRHSLYKMLGYFSLVGLLRLHSLLGDYYQAIKVLENIELNKKSMYSRVPECQVTTYYYVGFAYLMMRRYQDAIRVFANILLYIQRTKSMFQRTTYKYEMINKQNEQMHALLAIALTMYPMRIDESIHLQLREKYGDKMLRMQKGDPQVYEELFSYSCPKFLSPVVPNYDNVHPNYHKEPFLQQLKVFSDEVQQQAQLSTIRSFLKLYTTMPVAKLAGFLDLTEQEFRIQLLVFKHKMKNLVWTSGISALDGEFQSASEVDFYIDKDMIHIADTKVARRYGDFFIRQIHKFEELNRTLKKMGQRP.

Residue Ser2 is modified to N-acetylserine. Positions 331-537 (DAIRVFANIL…IHIADTKVAR (207 aa)) constitute a PCI domain. 2 positions are modified to N6-acetyllysine: Lys465 and Lys549.

This sequence belongs to the eIF-3 subunit L family. Component of the eukaryotic translation initiation factor 3 (eIF-3) complex, which is composed of 13 subunits: EIF3A, EIF3B, EIF3C, EIF3D, EIF3E, EIF3F, EIF3G, EIF3H, EIF3I, EIF3J, EIF3K, EIF3L and EIF3M. The eIF-3 complex appears to include 3 stable modules: module A is composed of EIF3A, EIF3B, EIF3G and EIF3I; module B is composed of EIF3F, EIF3H, and EIF3M; and module C is composed of EIF3C, EIF3D, EIF3E, EIF3K and EIF3L. EIF3C of module C binds EIF3B of module A and EIF3H of module B, thereby linking the three modules. EIF3J is a labile subunit that binds to the eIF-3 complex via EIF3B. The eIF-3 complex interacts with RPS6KB1 under conditions of nutrient depletion. Mitogenic stimulation leads to binding and activation of a complex composed of MTOR and RPTOR, leading to phosphorylation and release of RPS6KB1 and binding of EIF4B to eIF-3. Interacts with RRN3.

Its subcellular location is the cytoplasm. Functionally, component of the eukaryotic translation initiation factor 3 (eIF-3) complex, which is required for several steps in the initiation of protein synthesis. The eIF-3 complex associates with the 40S ribosome and facilitates the recruitment of eIF-1, eIF-1A, eIF-2:GTP:methionyl-tRNAi and eIF-5 to form the 43S pre-initiation complex (43S PIC). The eIF-3 complex stimulates mRNA recruitment to the 43S PIC and scanning of the mRNA for AUG recognition. The eIF-3 complex is also required for disassembly and recycling of post-termination ribosomal complexes and subsequently prevents premature joining of the 40S and 60S ribosomal subunits prior to initiation. The eIF-3 complex specifically targets and initiates translation of a subset of mRNAs involved in cell proliferation, including cell cycling, differentiation and apoptosis, and uses different modes of RNA stem-loop binding to exert either translational activation or repression. This is Eukaryotic translation initiation factor 3 subunit L from Bos taurus (Bovine).